A 76-amino-acid chain; its full sequence is UPF0154 protein Exig_1099 (76 aa).

A helical transmembrane segment spans residues 4–24; it reads WIWILIALLCLVAGVALGFYI. The disordered stretch occupies residues 54–76; sequence KPSQKKVNQVMRSMSGSMKSPKK.

The protein belongs to the UPF0154 family.

It is found in the cell membrane. In Exiguobacterium sibiricum (strain DSM 17290 / CCUG 55495 / CIP 109462 / JCM 13490 / 255-15), this protein is UPF0154 protein Exig_1099.